Here is a 146-residue protein sequence, read N- to C-terminus: UPF0260 protein Spea_2441 (146 aa).

This sequence belongs to the UPF0260 family.

This is UPF0260 protein Spea_2441 from Shewanella pealeana (strain ATCC 700345 / ANG-SQ1).